Consider the following 308-residue polypeptide: Ribonuclease HIII (308 aa).

The 217-residue stretch at 88–304 (FHCIGSDEAG…RDKAIHLINQ (217 aa)) folds into the RNase H type-2 domain. A divalent metal cation-binding residues include Asp94, Glu95, and Asp199.

It belongs to the RNase HII family. RnhC subfamily. Mn(2+) serves as cofactor. Mg(2+) is required as a cofactor.

Its subcellular location is the cytoplasm. The catalysed reaction is Endonucleolytic cleavage to 5'-phosphomonoester.. In terms of biological role, endonuclease that specifically degrades the RNA of RNA-DNA hybrids. This chain is Ribonuclease HIII, found in Staphylococcus epidermidis (strain ATCC 35984 / DSM 28319 / BCRC 17069 / CCUG 31568 / BM 3577 / RP62A).